The chain runs to 195 residues: MKIGVLALQGAFREHLNMLGTLGAEAVEVRKAEGLPELSGLIIPGGESTTITKLLDIFGMAEPIKALAKKGMPIWGTCAGMICLAKELPGDISGVKPLGLMDITVRRNAFGRQVNSFEAMLKVKGLDEADFPAVFIRAPLVEKTGKGVEILSKLPDGTIVAVRENNLLAISFHPELSGDNRFHRYFVQMAKTYKA.

An L-glutamine-binding site is contributed by 46 to 48 (GES). Catalysis depends on C78, which acts as the Nucleophile. Residues R107 and 136-137 (IR) each bind L-glutamine. Catalysis depends on charge relay system residues H173 and E175.

The protein belongs to the glutaminase PdxT/SNO family. In the presence of PdxS, forms a dodecamer of heterodimers. Only shows activity in the heterodimer.

It catalyses the reaction aldehydo-D-ribose 5-phosphate + D-glyceraldehyde 3-phosphate + L-glutamine = pyridoxal 5'-phosphate + L-glutamate + phosphate + 3 H2O + H(+). It carries out the reaction L-glutamine + H2O = L-glutamate + NH4(+). It participates in cofactor biosynthesis; pyridoxal 5'-phosphate biosynthesis. Its function is as follows. Catalyzes the hydrolysis of glutamine to glutamate and ammonia as part of the biosynthesis of pyridoxal 5'-phosphate. The resulting ammonia molecule is channeled to the active site of PdxS. In Dehalococcoides mccartyi (strain CBDB1), this protein is Pyridoxal 5'-phosphate synthase subunit PdxT.